Consider the following 330-residue polypeptide: tRNA U34 carboxymethyltransferase (330 aa).

Carboxy-S-adenosyl-L-methionine-binding positions include K91, W105, K110, G130, 152 to 154 (DPS), 181 to 182 (IE), M196, Y200, and R315.

It belongs to the class I-like SAM-binding methyltransferase superfamily. CmoB family. Homotetramer.

It carries out the reaction carboxy-S-adenosyl-L-methionine + 5-hydroxyuridine(34) in tRNA = 5-carboxymethoxyuridine(34) in tRNA + S-adenosyl-L-homocysteine + H(+). In terms of biological role, catalyzes carboxymethyl transfer from carboxy-S-adenosyl-L-methionine (Cx-SAM) to 5-hydroxyuridine (ho5U) to form 5-carboxymethoxyuridine (cmo5U) at position 34 in tRNAs. In Shewanella sediminis (strain HAW-EB3), this protein is tRNA U34 carboxymethyltransferase.